The sequence spans 239 residues: Glucosamine-6-phosphate deaminase (239 aa).

Asp62 serves as the catalytic Proton acceptor; for enolization step. The active-site For ring-opening step is Asn128. The Proton acceptor; for ring-opening step role is filled by His130. Glu135 acts as the For ring-opening step in catalysis.

It belongs to the glucosamine/galactosamine-6-phosphate isomerase family. NagB subfamily.

The enzyme catalyses alpha-D-glucosamine 6-phosphate + H2O = beta-D-fructose 6-phosphate + NH4(+). It participates in amino-sugar metabolism; N-acetylneuraminate degradation; D-fructose 6-phosphate from N-acetylneuraminate: step 5/5. Catalyzes the reversible isomerization-deamination of glucosamine 6-phosphate (GlcN6P) to form fructose 6-phosphate (Fru6P) and ammonium ion. This chain is Glucosamine-6-phosphate deaminase, found in Lactobacillus acidophilus (strain ATCC 700396 / NCK56 / N2 / NCFM).